Consider the following 481-residue polypeptide: Threonine synthase (481 aa).

N6-(pyridoxal phosphate)lysine is present on Lys118.

Belongs to the threonine synthase family. As to quaternary structure, monomer. Pyridoxal 5'-phosphate serves as cofactor.

The catalysed reaction is O-phospho-L-homoserine + H2O = L-threonine + phosphate. It functions in the pathway amino-acid biosynthesis; L-threonine biosynthesis; L-threonine from L-aspartate: step 5/5. Its function is as follows. Catalyzes the gamma-elimination of phosphate from L-phosphohomoserine and the beta-addition of water to produce L-threonine. The protein is Threonine synthase (thrC) of Corynebacterium glutamicum (strain ATCC 13032 / DSM 20300 / JCM 1318 / BCRC 11384 / CCUG 27702 / LMG 3730 / NBRC 12168 / NCIMB 10025 / NRRL B-2784 / 534).